Consider the following 729-residue polypeptide: Cytoplasmic polyadenylation element-binding protein 4 (729 aa).

Disordered stretches follow at residues 20–50 (FPVRFHPHLQPPHHHQNATPNPAAFINNNTA) and 78–133 (EKAK…KEKL). A compositionally biased stretch (basic residues) spans 24–35 (FHPHLQPPHHHQ). Residues 83–96 (QQQEQQDPLEKQQL) are compositionally biased toward low complexity. 3 positions are modified to phosphoserine: Ser97, Ser99, and Ser137. The segment at 218–324 (FGGSFSPQIG…RDHRRGLNGG (107 aa)) is disordered. Over residues 232 to 249 (HHPHHPHFQHHHSQHQQQ) the composition is skewed to basic residues. Phosphoserine is present on residues Ser252 and Ser255. A compositionally biased stretch (low complexity) spans 285 to 300 (WSSYQSPSPTPSSSWS). Gly residues predominate over residues 301–311 (PGGGGYGGWGA). A Phosphothreonine modification is found at Thr326. A phosphoserine mark is found at Ser330 and Ser332. RRM domains lie at 472-563 (RKVF…PWNL) and 580-662 (KTIF…PYVL). Residues 541-543 (KLY) are RNA-binding. Residues Cys667, Cys675, Cys684, Cys689, Cys694, Cys697, His702, and His710 each coordinate Zn(2+).

The protein belongs to the RRM CPEB family. In terms of assembly, interacts with TOB1. In terms of tissue distribution, highly expressed in brain, including hippocampus, amygdala, granule and Purkinje cells of the cerebellum (at protein level). Expressed in spinal cord (at protein level). Expressed in kidney, lung and heart (at protein level). Expressed in liver (at protein level). Expressed in spleen and testis (at protein level). Weakly expressed in ovary and in granular cells of dentate gyrus and the pyramidal cells of CA3 and CA1 of the hippocampus.

It localises to the cytoplasm. The protein resides in the cell projection. The protein localises to the dendrite. Its subcellular location is the dendritic spine. It is found in the postsynaptic density. It localises to the axon. The protein resides in the growth cone. The protein localises to the endoplasmic reticulum. Its subcellular location is the perinuclear region. Its function is as follows. Sequence-specific RNA-binding protein that binds to the cytoplasmic polyadenylation element (CPE), an uridine-rich sequence element (consensus sequence 5'-UUUUUAU-3') within the mRNA 3'-UTR. RNA binding results in a clear conformational change analogous to the Venus fly trap mechanism. Regulates activation of unfolded protein response (UPR) in the process of adaptation to ER stress in liver, by maintaining translation of CPE-regulated mRNAs in conditions in which global protein synthesis is inhibited. Required for cell cycle progression, specifically for cytokinesis and chromosomal segregation. Plays a role as an oncogene promoting tumor growth and progression by positively regulating translation of t-plasminogen activator/PLAT. Stimulates proliferation of melanocytes. In contrast to CPEB1 and CPEB3, does not play role in synaptic plasticity, learning and memory. In Mus musculus (Mouse), this protein is Cytoplasmic polyadenylation element-binding protein 4 (Cpeb4).